We begin with the raw amino-acid sequence, 333 residues long: Structure-specific endonuclease subunit SLX1 homolog (333 aa).

The 90-residue stretch at 68 to 157 (DFFGVYCLLS…KSRRLRLLNL (90 aa)) folds into the GIY-YIG domain. The segment at 237–293 (CSLCLKPILSISELLRCHANETCKSHFHMRCLSKHALNAVDEYRTSLFPIQGQCPKC) adopts an SLX1-type zinc-finger fold.

It belongs to the SLX1 family. As to quaternary structure, forms a heterodimer with a member of the SLX4 family. A divalent metal cation serves as cofactor.

It localises to the nucleus. In terms of biological role, catalytic subunit of a heterodimeric structure-specific endonuclease that resolves DNA secondary structures generated during DNA repair and recombination. Has endonuclease activity towards branched DNA substrates, introducing single-strand cuts in duplex DNA close to junctions with ss-DNA. The chain is Structure-specific endonuclease subunit SLX1 homolog from Brugia malayi (Filarial nematode worm).